The primary structure comprises 140 residues: MENKLKLEVITPYGEVINEEVDEVYTTGAEGDFGVFPGHCAFMTAIRIGSLSYKKDGQMHYLFVNRGYCEVLNDRVLVLVGSAERVEEIDVERAKAALARAEERLRKAQAGETDIDLARAQAALERATIRIQLATKLIPR.

This sequence belongs to the ATPase epsilon chain family. As to quaternary structure, F-type ATPases have 2 components, CF(1) - the catalytic core - and CF(0) - the membrane proton channel. CF(1) has five subunits: alpha(3), beta(3), gamma(1), delta(1), epsilon(1). CF(0) has three main subunits: a, b and c.

The protein localises to the cell inner membrane. Functionally, produces ATP from ADP in the presence of a proton gradient across the membrane. In Thermodesulfovibrio yellowstonii (strain ATCC 51303 / DSM 11347 / YP87), this protein is ATP synthase epsilon chain.